Consider the following 614-residue polypeptide: Replication protein A 70 kDa DNA-binding subunit (614 aa).

A disordered region spans residues G112–Q178. Composition is skewed to polar residues over residues G120–T130 and P158–Q178. The segment at residues W194–N278 is a DNA-binding region (OB). The C4-type zinc finger occupies C478 to C500.

This sequence belongs to the replication factor A protein 1 family. As to quaternary structure, component of the heterotrimeric canonical replication protein A complex (RPA).

It localises to the nucleus. It is found in the PML body. As part of the heterotrimeric replication protein A complex (RPA/RP-A), binds and stabilizes single-stranded DNA intermediates, that form during DNA replication or upon DNA stress. It prevents their reannealing and in parallel, recruits and activates different proteins and complexes involved in DNA metabolism. Thereby, it plays an essential role both in DNA replication and the cellular response to DNA damage. The polypeptide is Replication protein A 70 kDa DNA-binding subunit (RPA1) (Gallus gallus (Chicken)).